Here is a 151-residue protein sequence, read N- to C-terminus: Deoxyuridine 5'-triphosphate nucleotidohydrolase (151 aa).

Residues 70-72 (RSG), Asn83, 87-89 (LID), and Met97 contribute to the substrate site.

It belongs to the dUTPase family. Requires Mg(2+) as cofactor.

It carries out the reaction dUTP + H2O = dUMP + diphosphate + H(+). It functions in the pathway pyrimidine metabolism; dUMP biosynthesis; dUMP from dCTP (dUTP route): step 2/2. This enzyme is involved in nucleotide metabolism: it produces dUMP, the immediate precursor of thymidine nucleotides and it decreases the intracellular concentration of dUTP so that uracil cannot be incorporated into DNA. The polypeptide is Deoxyuridine 5'-triphosphate nucleotidohydrolase (Salmonella enteritidis PT4 (strain P125109)).